The chain runs to 405 residues: Multi-drug resistance efflux pump PmrA homolog (405 aa).

The next 12 membrane-spanning stretches (helical) occupy residues 13-33 (LFIT…VMPF), 50-70 (LYSG…APIW), 88-108 (IVMT…WLLG), 111-131 (LLMG…ASQA), 147-167 (MVSG…WFGM), 170-190 (VFLI…FFVH), 216-236 (ILFG…SIEP), 254-274 (FISG…SSFL), 286-306 (LILI…FVQS), 308-328 (LQLG…TPSV), 350-370 (MCSN…AGYI), and 374-394 (AAIV…FINF).

This sequence belongs to the major facilitator superfamily. TCR/Tet family.

It is found in the cell membrane. In terms of biological role, efflux pump for various substrates. In Lactococcus lactis subsp. lactis (strain IL1403) (Streptococcus lactis), this protein is Multi-drug resistance efflux pump PmrA homolog (pmrA).